Consider the following 268-residue polypeptide: Proteasome subunit beta type-4 (268 aa).

The protein belongs to the peptidase T1B family. The 26S proteasome consists of a 20S proteasome core and two 19S regulatory subunits. The 20S proteasome core is composed of 28 subunits that are arranged in four stacked rings, resulting in a barrel-shaped structure. The two end rings are each formed by seven alpha subunits, and the two central rings are each formed by seven beta subunits. The catalytic chamber with the active sites is on the inside of the barrel.

It localises to the cytoplasm. It is found in the nucleus. Non-catalytic component of the proteasome, a multicatalytic proteinase complex which is characterized by its ability to cleave peptides with Arg, Phe, Tyr, Leu, and Glu adjacent to the leaving group at neutral or slightly basic pH. The proteasome has an ATP-dependent proteolytic activity. The protein is Proteasome subunit beta type-4 (Prosbeta7) of Drosophila melanogaster (Fruit fly).